The chain runs to 248 residues: tRNA pseudouridine synthase A (248 aa).

Asp54 (nucleophile) is an active-site residue. Tyr112 is a binding site for substrate.

This sequence belongs to the tRNA pseudouridine synthase TruA family. In terms of assembly, homodimer.

It carries out the reaction uridine(38/39/40) in tRNA = pseudouridine(38/39/40) in tRNA. Its function is as follows. Formation of pseudouridine at positions 38, 39 and 40 in the anticodon stem and loop of transfer RNAs. This is tRNA pseudouridine synthase A from Geobacillus sp. (strain WCH70).